A 504-amino-acid polypeptide reads, in one-letter code: ATP synthase subunit alpha (504 aa).

An ATP-binding site is contributed by Gly170–Thr177.

It belongs to the ATPase alpha/beta chains family. F-type ATPases have 2 components, CF(1) - the catalytic core - and CF(0) - the membrane proton channel. CF(1) has five subunits: alpha(3), beta(3), gamma(1), delta(1), epsilon(1). CF(0) has three main subunits: a(1), b(2) and c(9-12). The alpha and beta chains form an alternating ring which encloses part of the gamma chain. CF(1) is attached to CF(0) by a central stalk formed by the gamma and epsilon chains, while a peripheral stalk is formed by the delta and b chains.

Its subcellular location is the cell membrane. It catalyses the reaction ATP + H2O + 4 H(+)(in) = ADP + phosphate + 5 H(+)(out). In terms of biological role, produces ATP from ADP in the presence of a proton gradient across the membrane. The alpha chain is a regulatory subunit. In Shouchella clausii (strain KSM-K16) (Alkalihalobacillus clausii), this protein is ATP synthase subunit alpha.